Consider the following 109-residue polypeptide: U4-lycotoxin-Ls1c (109 aa).

The signal sequence occupies residues 1-22 (MKVLVLFSVLFLTLFSYSSTEA). The propeptide occupies 23–44 (IDEFDSDAEDDMLSLMANEQVR). The tract at residues 45–88 (AKACTPRLHDCSHDRHSCCRGELFKDVCYCFYPEGEDITEVCSC) is knottin domain. 4 disulfide bridges follow: C48/C63, C55/C72, C62/C88, and C74/C86. The linear cationic cytotoxin domain stretch occupies residues 89–108 (QQPKSHKYIEKVVDKAKTVV).

Belongs to the neurotoxin 19 (CSTX) family. 05 (U4-Lctx) subfamily. In terms of tissue distribution, expressed by the venom gland.

The protein resides in the secreted. Its function is as follows. Enhances the high-affinity desensitization of human P2RX3 purinoceptors. This is U4-lycotoxin-Ls1c from Lycosa singoriensis (Wolf spider).